A 387-amino-acid polypeptide reads, in one-letter code: UDP-N-acetylglucosamine--N-acetylmuramyl-(pentapeptide) pyrophosphoryl-undecaprenol N-acetylglucosamine transferase (387 aa).

Residues 14 to 16 (TGG), Asn124, Arg167, Ser195, and Gln296 each bind UDP-N-acetyl-alpha-D-glucosamine. Residues 366 to 387 (LPQQNSIEEDSTFEKNQEGAVA) are disordered. A compositionally biased stretch (basic and acidic residues) spans 377 to 387 (TFEKNQEGAVA).

Belongs to the glycosyltransferase 28 family. MurG subfamily.

Its subcellular location is the cell inner membrane. It catalyses the reaction di-trans,octa-cis-undecaprenyl diphospho-N-acetyl-alpha-D-muramoyl-L-alanyl-D-glutamyl-meso-2,6-diaminopimeloyl-D-alanyl-D-alanine + UDP-N-acetyl-alpha-D-glucosamine = di-trans,octa-cis-undecaprenyl diphospho-[N-acetyl-alpha-D-glucosaminyl-(1-&gt;4)]-N-acetyl-alpha-D-muramoyl-L-alanyl-D-glutamyl-meso-2,6-diaminopimeloyl-D-alanyl-D-alanine + UDP + H(+). It functions in the pathway cell wall biogenesis; peptidoglycan biosynthesis. Functionally, cell wall formation. Catalyzes the transfer of a GlcNAc subunit on undecaprenyl-pyrophosphoryl-MurNAc-pentapeptide (lipid intermediate I) to form undecaprenyl-pyrophosphoryl-MurNAc-(pentapeptide)GlcNAc (lipid intermediate II). This is UDP-N-acetylglucosamine--N-acetylmuramyl-(pentapeptide) pyrophosphoryl-undecaprenol N-acetylglucosamine transferase from Zymomonas mobilis subsp. mobilis (strain ATCC 31821 / ZM4 / CP4).